The following is a 451-amino-acid chain: Methylenetetrahydrofolate--tRNA-(uracil-5-)-methyltransferase TrmFO (451 aa).

9–14 (GGGMAG) contacts FAD.

The protein belongs to the MnmG family. TrmFO subfamily. FAD is required as a cofactor.

The protein resides in the cytoplasm. It carries out the reaction uridine(54) in tRNA + (6R)-5,10-methylene-5,6,7,8-tetrahydrofolate + NADH + H(+) = 5-methyluridine(54) in tRNA + (6S)-5,6,7,8-tetrahydrofolate + NAD(+). It catalyses the reaction uridine(54) in tRNA + (6R)-5,10-methylene-5,6,7,8-tetrahydrofolate + NADPH + H(+) = 5-methyluridine(54) in tRNA + (6S)-5,6,7,8-tetrahydrofolate + NADP(+). In terms of biological role, catalyzes the folate-dependent formation of 5-methyl-uridine at position 54 (M-5-U54) in all tRNAs. This is Methylenetetrahydrofolate--tRNA-(uracil-5-)-methyltransferase TrmFO from Dinoroseobacter shibae (strain DSM 16493 / NCIMB 14021 / DFL 12).